The chain runs to 258 residues: Phosphate import ATP-binding protein PstB 2 (258 aa).

Positions 12-253 constitute an ABC transporter domain; the sequence is IQVRDLNFYY…PQQKQTEDYI (242 aa). 44–51 is an ATP binding site; the sequence is GPSGCGKS.

This sequence belongs to the ABC transporter superfamily. Phosphate importer (TC 3.A.1.7) family. The complex is composed of two ATP-binding proteins (PstB), two transmembrane proteins (PstC and PstA) and a solute-binding protein (PstS).

Its subcellular location is the cell inner membrane. The enzyme catalyses phosphate(out) + ATP + H2O = ADP + 2 phosphate(in) + H(+). Part of the ABC transporter complex PstSACB involved in phosphate import. Responsible for energy coupling to the transport system. The polypeptide is Phosphate import ATP-binding protein PstB 2 (Yersinia pestis bv. Antiqua (strain Nepal516)).